A 432-amino-acid chain; its full sequence is Trigger factor (432 aa).

In terms of domain architecture, PPIase FKBP-type spans 161–246 (GTRATINFVG…VVKVESRELP (86 aa)).

The protein belongs to the FKBP-type PPIase family. Tig subfamily.

The protein localises to the cytoplasm. The enzyme catalyses [protein]-peptidylproline (omega=180) = [protein]-peptidylproline (omega=0). Involved in protein export. Acts as a chaperone by maintaining the newly synthesized protein in an open conformation. Functions as a peptidyl-prolyl cis-trans isomerase. The sequence is that of Trigger factor from Aliivibrio fischeri (strain ATCC 700601 / ES114) (Vibrio fischeri).